The following is a 453-amino-acid chain: Homeobox protein meis3 (453 aa).

The interval 33-64 (HHSLSQSAPYGSTGAAHRVPMPPGMGSNDGLK) is disordered. The region spanning 102–185 (GGDVCSSDSF…PIDLVIDDRD (84 aa)) is the MEIS N-terminal domain. The tract at residues 192-272 (LEDFTGSCTS…RDKKRNKKRG (81 aa)) is disordered. Positions 197 to 209 (GSCTSLSDQNNSW) are enriched in polar residues. The span at 218 to 230 (STHSGTPGPSSGG) shows a compositional bias: low complexity. The span at 231–242 (LASQSGDNSSEQ) shows a compositional bias: polar residues. Positions 267–329 (RNKKRGIFPK…NARRRIVQPM (63 aa)) form a DNA-binding region, homeobox.

The protein belongs to the TALE/MEIS homeobox family.

It localises to the nucleus. Its function is as follows. A caudalizing protein which is required to pattern the anterior/posterior (A/P) axis during central nervous system (CNS) formation. Inhibits anterior neural expression and acts as a transcriptional activator to induce posterior neural gene expression. Maintains a proper A/P balance required for hindbrain formation by activating the FGF/MAPK pathway, which modulates the planar cell polarity (PCP) pathway. Interacts with retinoid signaling during hindbrain patterning. This is Homeobox protein meis3 from Xenopus tropicalis (Western clawed frog).